Consider the following 247-residue polypeptide: 3-deoxy-manno-octulosonate cytidylyltransferase (247 aa).

It belongs to the KdsB family.

The protein resides in the cytoplasm. It carries out the reaction 3-deoxy-alpha-D-manno-oct-2-ulosonate + CTP = CMP-3-deoxy-beta-D-manno-octulosonate + diphosphate. The protein operates within nucleotide-sugar biosynthesis; CMP-3-deoxy-D-manno-octulosonate biosynthesis; CMP-3-deoxy-D-manno-octulosonate from 3-deoxy-D-manno-octulosonate and CTP: step 1/1. It participates in bacterial outer membrane biogenesis; lipopolysaccharide biosynthesis. Functionally, activates KDO (a required 8-carbon sugar) for incorporation into bacterial lipopolysaccharide in Gram-negative bacteria. The chain is 3-deoxy-manno-octulosonate cytidylyltransferase from Chlorobium limicola (strain DSM 245 / NBRC 103803 / 6330).